The sequence spans 271 residues: GPN-loop GTPase 3 (271 aa).

Position 13 to 18 (13 to 18) interacts with GTP; it reads GAGKST. Positions 70 to 72 match the Gly-Pro-Asn (GPN)-loop; involved in dimer interface motif; it reads GPN. 173 to 176 serves as a coordination point for GTP; sequence SKLD.

Belongs to the GPN-loop GTPase family. Heterodimers with GPN1 or GPN2. Binds to RNA polymerase II (RNAPII).

In terms of biological role, small GTPase required for proper nuclear import of RNA polymerase II and III (RNAPII and RNAPIII). May act at an RNAP assembly step prior to nuclear import. This chain is GPN-loop GTPase 3, found in Kluyveromyces lactis (strain ATCC 8585 / CBS 2359 / DSM 70799 / NBRC 1267 / NRRL Y-1140 / WM37) (Yeast).